Consider the following 369-residue polypeptide: Putative glutamate--cysteine ligase 2-1 (369 aa).

This sequence belongs to the glutamate--cysteine ligase type 2 family. YbdK subfamily.

The catalysed reaction is L-cysteine + L-glutamate + ATP = gamma-L-glutamyl-L-cysteine + ADP + phosphate + H(+). Its function is as follows. ATP-dependent carboxylate-amine ligase which exhibits weak glutamate--cysteine ligase activity. The protein is Putative glutamate--cysteine ligase 2-1 of Rhodococcus jostii (strain RHA1).